The primary structure comprises 445 residues: Phosphoglucosamine mutase (445 aa).

Catalysis depends on serine 102, which acts as the Phosphoserine intermediate. Residues serine 102, aspartate 241, aspartate 243, and aspartate 245 each coordinate Mg(2+). The residue at position 102 (serine 102) is a Phosphoserine.

This sequence belongs to the phosphohexose mutase family. The cofactor is Mg(2+). In terms of processing, activated by phosphorylation.

It catalyses the reaction alpha-D-glucosamine 1-phosphate = D-glucosamine 6-phosphate. Functionally, catalyzes the conversion of glucosamine-6-phosphate to glucosamine-1-phosphate. This chain is Phosphoglucosamine mutase, found in Klebsiella pneumoniae (strain 342).